Here is a 342-residue protein sequence, read N- to C-terminus: MYSHVRDLLFRLNPETSHEFSLDMLGAAERLKLIGLMAAKVPETPVEVMGLRFPNPVGLAAGLDKNGDYFNALGALGFGFVEIGTITPRPQPGNAQPRLFRIPEAKAIINRMGFNNKGVDHLVAQVKKRRYQGILGINIGKNATTPVENAVDDYLTCLRKVYDHADYITVNISSPNTPGLRSLQFGDSLSQLLAPLKKEQGVLQQAGGRYVPIAVKIAPDMDDSEIAQVAGVLLQEGMDGVIATNTTIGREGVEGYDTGKEAGGLSGLPVRDKSTAVIQSLNQCLGGKLPIIGVGGIFDGASAADKVRAGASLVQVYSGFIYEGPALIAAAAAGIASYHQGQ.

FMN contacts are provided by residues 61–65 (AGLDK) and Thr-85. Lys-65 is a binding site for substrate. Residue 110 to 114 (NRMGF) coordinates substrate. FMN contacts are provided by Asn-138 and Asn-171. Asn-171 is a binding site for substrate. Ser-174 serves as the catalytic Nucleophile. Asn-176 lines the substrate pocket. Residues Lys-216 and Thr-244 each contribute to the FMN site. 245–246 (NT) serves as a coordination point for substrate. FMN contacts are provided by residues Gly-267, Gly-296, and 317–318 (YS).

It belongs to the dihydroorotate dehydrogenase family. Type 2 subfamily. In terms of assembly, monomer. The cofactor is FMN.

The protein resides in the cell membrane. It carries out the reaction (S)-dihydroorotate + a quinone = orotate + a quinol. It participates in pyrimidine metabolism; UMP biosynthesis via de novo pathway; orotate from (S)-dihydroorotate (quinone route): step 1/1. Catalyzes the conversion of dihydroorotate to orotate with quinone as electron acceptor. This is Dihydroorotate dehydrogenase (quinone) from Cellvibrio japonicus (strain Ueda107) (Pseudomonas fluorescens subsp. cellulosa).